The sequence spans 823 residues: Leucine--tRNA ligase (823 aa).

Residues 42–52 carry the 'HIGH' region motif; it reads PYPSGTLHMGH. Residues 575 to 579 carry the 'KMSKS' region motif; that stretch reads KMSKS. ATP is bound at residue Lys-578.

It belongs to the class-I aminoacyl-tRNA synthetase family.

It is found in the cytoplasm. It carries out the reaction tRNA(Leu) + L-leucine + ATP = L-leucyl-tRNA(Leu) + AMP + diphosphate. The chain is Leucine--tRNA ligase from Legionella pneumophila (strain Lens).